The chain runs to 227 residues: ATP phosphoribosyltransferase (227 aa).

The protein belongs to the ATP phosphoribosyltransferase family. Short subfamily. Heteromultimer composed of HisG and HisZ subunits.

The protein resides in the cytoplasm. It carries out the reaction 1-(5-phospho-beta-D-ribosyl)-ATP + diphosphate = 5-phospho-alpha-D-ribose 1-diphosphate + ATP. The protein operates within amino-acid biosynthesis; L-histidine biosynthesis; L-histidine from 5-phospho-alpha-D-ribose 1-diphosphate: step 1/9. Catalyzes the condensation of ATP and 5-phosphoribose 1-diphosphate to form N'-(5'-phosphoribosyl)-ATP (PR-ATP). Has a crucial role in the pathway because the rate of histidine biosynthesis seems to be controlled primarily by regulation of HisG enzymatic activity. This is ATP phosphoribosyltransferase from Rhodospirillum rubrum (strain ATCC 11170 / ATH 1.1.1 / DSM 467 / LMG 4362 / NCIMB 8255 / S1).